The sequence spans 116 residues: MLYISGARLVGDEQVRIASTKIDGIGPKKAIQVRYRLGISGNIKIKELTKYQIDQIEQMIGQDHVVHWELKRGERADIERLISISCYRGIRHQDGSPLRGQRTHTNARTCRKLIRK.

This sequence belongs to the universal ribosomal protein uS13 family. Part of the small ribosomal subunit.

The protein resides in the mitochondrion. In terms of biological role, located at the top of the head of the small subunit, it contacts several helices of the 18S rRNA. This chain is Small ribosomal subunit protein uS13m (RPS13), found in Nicotiana tabacum (Common tobacco).